We begin with the raw amino-acid sequence, 335 residues long: Glycerol-3-phosphate dehydrogenase [NAD(P)+] (335 aa).

NADPH-binding residues include Ser-15, Tyr-16, Arg-36, and Lys-110. Lys-110, Gly-139, and Thr-141 together coordinate sn-glycerol 3-phosphate. An NADPH-binding site is contributed by Ala-143. Positions 195, 248, 258, 259, and 260 each coordinate sn-glycerol 3-phosphate. Lys-195 acts as the Proton acceptor in catalysis. Arg-259 contacts NADPH. Positions 283 and 285 each coordinate NADPH.

It belongs to the NAD-dependent glycerol-3-phosphate dehydrogenase family.

The protein resides in the cytoplasm. The enzyme catalyses sn-glycerol 3-phosphate + NAD(+) = dihydroxyacetone phosphate + NADH + H(+). It carries out the reaction sn-glycerol 3-phosphate + NADP(+) = dihydroxyacetone phosphate + NADPH + H(+). It participates in membrane lipid metabolism; glycerophospholipid metabolism. In terms of biological role, catalyzes the reduction of the glycolytic intermediate dihydroxyacetone phosphate (DHAP) to sn-glycerol 3-phosphate (G3P), the key precursor for phospholipid synthesis. This is Glycerol-3-phosphate dehydrogenase [NAD(P)+] from Pseudoalteromonas translucida (strain TAC 125).